The following is an 80-amino-acid chain: Protein FAM229B (80 aa).

The tract at residues 1–44 is disordered; that stretch reads MPFRFGTQPRRFPVEGGDSSIGLEPGLSSSATCNGKEMSPTRQL.

Belongs to the FAM229 family.

This Bos taurus (Bovine) protein is Protein FAM229B (FAM229B).